The chain runs to 311 residues: Triacylglycerol lipase (311 aa).

A signal peptide spans Met1–Ala26. Residues Pro35–Glu280 enclose the AB hydrolase-1 domain. Position 42 (Met42) interacts with substrate. The active-site Nucleophile is Ser108. His109 contributes to the substrate binding site. A disulfide bond links Cys209 and Cys261. A Ca(2+)-binding site is contributed by Asp235. Active-site charge relay system residues include Asp255 and His277. Asp279, Gln283, and Leu287 together coordinate Ca(2+).

This sequence belongs to the AB hydrolase superfamily. Pseudomonas lipase family. As to quaternary structure, monomer. Ca(2+) serves as cofactor.

It is found in the secreted. The catalysed reaction is a triacylglycerol + H2O = a diacylglycerol + a fatty acid + H(+). Na(+) increases lipase activity. Inhibited by diethyl p-nitrophenyl phosphate and 3,4-dichloroisocoumarin (DCI). Its function is as follows. Catalyzes the hydrolysis of triacylglycerol. It also exhibits some esterase activity with p-nitrophenyl acetate and Tween 80 as substrates, however the lipase activity is approximately eight times the esterase activity. It shows a marked specificity for the 1,3-oleyl residues of triolein. This is Triacylglycerol lipase from Pseudomonas aeruginosa (strain ATCC 15692 / DSM 22644 / CIP 104116 / JCM 14847 / LMG 12228 / 1C / PRS 101 / PAO1).